The primary structure comprises 387 residues: Galactokinase (387 aa).

32–35 (EHTD) serves as a coordination point for substrate. Residues S66 and 123-129 (GAGLSSS) each bind ATP. Mg(2+)-binding residues include S129 and E161. Catalysis depends on D173, which acts as the Proton acceptor. A substrate-binding site is contributed by Y223.

This sequence belongs to the GHMP kinase family. GalK subfamily.

The protein localises to the cytoplasm. The enzyme catalyses alpha-D-galactose + ATP = alpha-D-galactose 1-phosphate + ADP + H(+). It functions in the pathway carbohydrate metabolism; galactose metabolism. Catalyzes the transfer of the gamma-phosphate of ATP to D-galactose to form alpha-D-galactose-1-phosphate (Gal-1-P). This chain is Galactokinase, found in Enterococcus faecalis (strain ATCC 700802 / V583).